A 302-amino-acid chain; its full sequence is Recombination-associated protein RdgC (302 aa).

The protein belongs to the RdgC family.

The protein resides in the cytoplasm. It localises to the nucleoid. Functionally, may be involved in recombination. This is Recombination-associated protein RdgC from Actinobacillus pleuropneumoniae serotype 5b (strain L20).